We begin with the raw amino-acid sequence, 101 residues long: Replication restart protein PriB (101 aa).

Residues 1–101 (MATNHLVLSG…LHAENVELKT (101 aa)) form the SSB domain.

Belongs to the PriB family. Homodimer. Interacts with PriA and DnaT. Component of the replication restart primosome. Primosome assembly occurs via a 'hand-off' mechanism. PriA binds to replication forks, subsequently PriB then DnaT bind; DnaT then displaces ssDNA to generate the helicase loading substrate.

Involved in the restart of stalled replication forks, which reloads the replicative helicase on sites other than the origin of replication; the PriA-PriB pathway is the major replication restart pathway. During primosome assembly it facilitates complex formation between PriA and DnaT on DNA; stabilizes PriA on DNA. Stimulates the DNA unwinding activity of PriA helicase. The polypeptide is Replication restart protein PriB (Shewanella sediminis (strain HAW-EB3)).